The primary structure comprises 492 residues: Fibroblast growth factor receptor substrate 3 (492 aa).

A lipid anchor (N-myristoyl glycine) is attached at glycine 2. The region spanning 13-115 (VPDNHPTKFK…QCNSINVMEE (103 aa)) is the IRS-type PTB domain. 3 disordered regions span residues 153 to 173 (GEGP…RHPS), 338 to 455 (QLGG…SDSY), and 467 to 492 (SNLQ…DLPL).

Binds NTRK1. Binds FGFR1, NGFR, GRB2, PTPN11 and ERK2. Phosphorylated by ULK2 in vitro. Phosphorylated on tyrosine residues upon stimulation by BFGF or NGFB.

Its subcellular location is the membrane. Adapter protein that links FGF and NGF receptors to downstream signaling pathways. Involved in the activation of MAP kinases. Down-regulates ERK2 signaling by interfering with the phosphorylation and nuclear translocation of ERK2. The polypeptide is Fibroblast growth factor receptor substrate 3 (FRS3) (Homo sapiens (Human)).